A 223-amino-acid polypeptide reads, in one-letter code: Protein-L-isoaspartate O-methyltransferase (223 aa).

Ser-70 is an active-site residue.

It belongs to the methyltransferase superfamily. L-isoaspartyl/D-aspartyl protein methyltransferase family.

It is found in the cytoplasm. It carries out the reaction [protein]-L-isoaspartate + S-adenosyl-L-methionine = [protein]-L-isoaspartate alpha-methyl ester + S-adenosyl-L-homocysteine. In terms of biological role, catalyzes the methyl esterification of L-isoaspartyl residues in peptides and proteins that result from spontaneous decomposition of normal L-aspartyl and L-asparaginyl residues. It plays a role in the repair and/or degradation of damaged proteins. This chain is Protein-L-isoaspartate O-methyltransferase, found in Methylobacillus flagellatus (strain ATCC 51484 / DSM 6875 / VKM B-1610 / KT).